An 809-amino-acid chain; its full sequence is Glycerol-3-phosphate acyltransferase (809 aa).

An HXXXXD motif motif is present at residues 306-311 (HRSHMD).

Belongs to the GPAT/DAPAT family.

Its subcellular location is the cell inner membrane. It catalyses the reaction sn-glycerol 3-phosphate + an acyl-CoA = a 1-acyl-sn-glycero-3-phosphate + CoA. Its pathway is phospholipid metabolism; CDP-diacylglycerol biosynthesis; CDP-diacylglycerol from sn-glycerol 3-phosphate: step 1/3. The chain is Glycerol-3-phosphate acyltransferase from Vibrio vulnificus (strain CMCP6).